Consider the following 913-residue polypeptide: Auxilin (913 aa).

The residue at position 1 (Met-1) is an N-acetylmethionine. Repeat copies occupy residues Asn-36–Asp-39, Asn-40–Asp-43, and Thr-44–Asp-47. A 3 X 4 AA approximate tandem repeats region spans residues Asn-36 to Asp-47. The 168-residue stretch at Ser-55–Lys-222 folds into the Phosphatase tensin-type domain. Position 112 is a phosphoserine (Ser-112). Residue Cys-164 is the Phosphocysteine intermediate of the active site. A C2 tensin-type domain is found at Phe-228 to Gln-366. Positions Pro-409–Pro-417 match the SH3-binding motif. The disordered stretch occupies residues Gln-451–Lys-776. Phosphoserine is present on residues Ser-453 and Ser-456. Positions Ala-506–Leu-523 are enriched in polar residues. Over residues Ala-554 to Thr-572 the composition is skewed to low complexity. Residues Ser-563 and Ser-570 each carry the phosphoserine modification. Residues Phe-599–Val-629 are compositionally biased toward polar residues. The span at Ser-654–His-669 shows a compositional bias: low complexity. The 65-residue stretch at Thr-849–Tyr-913 folds into the J domain.

Forms a complex composed of HSPA8, CLTC and DNAJC6. Interacts with HSPA8/HSC70 in an ATP-dependent manner; this interaction stimulates the HSPA8's ATPase activity. Interacts with CLTC; this interaction produces a local change in heavy-chain contacts, creating a detectable global distortion of the clathrin coat. Interacts with AP2A2. Interacts with DNM1(GTP-bound form); this interaction allows clathrin-coated vesicle (CCV) formation at the plasma membrane. Phosphorylation at Ser-570 modulates its ability to bind CLTC and therefore the synaptic vesicle endocytosis (SVE). In terms of processing, the N-terminus is blocked. As to expression, expressed in various brain regions, including cerebellum, corpus callosum, cortex, striatum, brainstem, pons, putamen, spinal cord and substantia nigra. Very low expression in non-neural tissues such as leukocytes, liver, adipose tissue, skeletal muscle and bone marrow.

It localises to the cytoplasmic vesicle. The protein localises to the clathrin-coated vesicle. Its function is as follows. May act as a protein phosphatase and/or a lipid phosphatase. Co-chaperone that recruits HSPA8/HSC70 to clathrin-coated vesicles (CCVs) and promotes the ATP-dependent dissociation of clathrin from CCVs and participates in clathrin-mediated endocytosis of synaptic vesicles and their recycling and also in intracellular trafficking. Firstly, binds tightly to the clathrin cages, at a ratio of one DNAJC6 per clathrin triskelion. The HSPA8:ATP complex then binds to the clathrin-auxilin cage, initially at a ratio of one HSPA8 per triskelion leading to ATP hydrolysis stimulation and causing a conformational change in the HSPA8. This cycle is repeated three times to drive to a complex containing the clathrin-auxilin cage associated to three HSPA8:ADP complex. The ATP hydrolysis of the third HSPA8:ATP complex leads to a concerted dismantling of the cage into component triskelia. Then, dissociates from the released triskelia and be recycled to initiate another cycle of HSPA8's recruitment. Also acts during the early steps of clathrin-coated vesicle (CCV) formation through its interaction with the GTP bound form of DNM1. This Homo sapiens (Human) protein is Auxilin.